Reading from the N-terminus, the 440-residue chain is Xylose isomerase (440 aa).

Active-site residues include histidine 101 and aspartate 104. 7 residues coordinate Mg(2+): glutamate 232, glutamate 268, histidine 271, aspartate 296, aspartate 307, aspartate 309, and aspartate 339.

It belongs to the xylose isomerase family. Homotetramer. Mg(2+) is required as a cofactor.

The protein localises to the cytoplasm. It carries out the reaction alpha-D-xylose = alpha-D-xylulofuranose. In Escherichia fergusonii (strain ATCC 35469 / DSM 13698 / CCUG 18766 / IAM 14443 / JCM 21226 / LMG 7866 / NBRC 102419 / NCTC 12128 / CDC 0568-73), this protein is Xylose isomerase.